The primary structure comprises 428 residues: Trigger factor (428 aa).

Residues 163–248 (GDTAVIDFEG…INEVKAKELP (86 aa)) enclose the PPIase FKBP-type domain.

The protein belongs to the FKBP-type PPIase family. Tig subfamily.

The protein localises to the cytoplasm. It catalyses the reaction [protein]-peptidylproline (omega=180) = [protein]-peptidylproline (omega=0). In terms of biological role, involved in protein export. Acts as a chaperone by maintaining the newly synthesized protein in an open conformation. Functions as a peptidyl-prolyl cis-trans isomerase. The sequence is that of Trigger factor from Oceanobacillus iheyensis (strain DSM 14371 / CIP 107618 / JCM 11309 / KCTC 3954 / HTE831).